The sequence spans 143 residues: Envelope protein A28 homolog (143 aa).

A helical; Signal-anchor for type II membrane protein transmembrane segment spans residues 1 to 21 (MNTVQILVVILITTALSFLVF). At 22 to 143 (QLWYYAENYE…LLRLLMANTS (122 aa)) the chain is on the virion surface side.

It belongs to the poxviridae A28 protein family. In terms of processing, contains two intramolecular disulfide bonds. They are created by the viral disulfide bond formation pathway, a poxvirus-specific pathway that operates on the cytoplasmic side of the MV membranes.

It localises to the virion membrane. Its function is as follows. Envelope protein required for virus entry into host cell and for cell-cell fusion (syncytium formation). The protein is Envelope protein A28 homolog of Amsacta (AmEPV).